Here is a 162-residue protein sequence, read N- to C-terminus: AP-1 complex subunit sigma-2 (162 aa).

This sequence belongs to the adaptor complexes small subunit family. As to quaternary structure, adaptor protein complex 1 (AP-1) is a heterotetramer composed of two large adaptins (gamma-type subunit and beta-type subunit), a medium adaptin (mu-type subunit) and a small adaptin (sigma-type subunit). As to expression, expressed in roots, stems, leaves, flowers and siliques (developing fruits and seeds).

It is found in the golgi apparatus. Its subcellular location is the cytoplasmic vesicle. The protein localises to the clathrin-coated vesicle membrane. Functionally, subunit of clathrin-associated adaptor protein complex 1 that plays a role in protein sorting at the trans-Golgi network and early endosomes (TGN/EE). The AP complexes mediate the recruitment of clathrin to membranes and the recognition of sorting signals within the cytosolic tails of transmembrane cargo molecules. The sequence is that of AP-1 complex subunit sigma-2 (AAP19-2) from Arabidopsis thaliana (Mouse-ear cress).